Reading from the N-terminus, the 339-residue chain is Protein RecA (339 aa).

An ATP-binding site is contributed by glycine 73–threonine 80.

This sequence belongs to the RecA family.

It is found in the cytoplasm. Functionally, can catalyze the hydrolysis of ATP in the presence of single-stranded DNA, the ATP-dependent uptake of single-stranded DNA by duplex DNA, and the ATP-dependent hybridization of homologous single-stranded DNAs. It interacts with LexA causing its activation and leading to its autocatalytic cleavage. The protein is Protein RecA of Mycoplasmopsis pulmonis (strain UAB CTIP) (Mycoplasma pulmonis).